A 287-amino-acid polypeptide reads, in one-letter code: mRNA-capping enzyme regulatory subunit OPG124 (287 aa).

It belongs to the orthopoxvirus mRNA-capping enzyme regulatory subunit family. In terms of assembly, interacts with the catalytic subunit OPG113.

It is found in the virion. Functionally, regulatory subunit of the mRNA cap enzyme which stabilizes the catalytic subunit and enhances its methyltransferase activity through an allosteric mechanism. Heterodimeric mRNA capping enzyme catalyzes the linkage of a N7-methyl-guanosine moiety to the first transcribed nucleotide (cap 0 structure), whereas the methyltransferase OPG102 is responsible for a second methylation at the 2'-O position of the ribose (cap 1 structure). Also involved in early viral gene transcription termination and intermediate viral gene transcription initiation. Early gene transcription termination requires the termination factor VTF, the DNA-dependent ATPase NPH-I/OPG123 and the RAP94/OPG109 subunit of the viral RNA polymerase, as well as the presence of a specific termination motif. Binds, together with RAP94/OPG109, to the termination motif 5'-UUUUUNU-3' in the nascent early mRNA. The protein is mRNA-capping enzyme regulatory subunit OPG124 (OPG124) of Variola virus (isolate Human/India/Ind3/1967) (VARV).